The sequence spans 200 residues: Probable molybdenum cofactor guanylyltransferase (200 aa).

Residues 9–11 (LAG), lysine 21, aspartate 69, and aspartate 100 each bind GTP. Residue aspartate 100 coordinates Mg(2+).

It belongs to the MobA family. Mg(2+) serves as cofactor.

It localises to the cytoplasm. It catalyses the reaction Mo-molybdopterin + GTP + H(+) = Mo-molybdopterin guanine dinucleotide + diphosphate. Its function is as follows. Transfers a GMP moiety from GTP to Mo-molybdopterin (Mo-MPT) cofactor (Moco or molybdenum cofactor) to form Mo-molybdopterin guanine dinucleotide (Mo-MGD) cofactor. This is Probable molybdenum cofactor guanylyltransferase from Bacillus cereus (strain AH187).